The primary structure comprises 220 residues: Fructose-6-phosphate aldolase (220 aa).

The active-site Schiff-base intermediate with substrate is the Lys-85.

It belongs to the transaldolase family. Type 3A subfamily. As to quaternary structure, homodecamer.

It is found in the cytoplasm. The enzyme catalyses beta-D-fructose 6-phosphate = dihydroxyacetone + D-glyceraldehyde 3-phosphate. Catalyzes the reversible formation of fructose 6-phosphate from dihydroxyacetone and D-glyceraldehyde 3-phosphate via an aldolization reaction. In Salmonella agona (strain SL483), this protein is Fructose-6-phosphate aldolase.